Here is a 531-residue protein sequence, read N- to C-terminus: Probable protein phosphatase 2C 66 (531 aa).

Residues 1–47 (MGSCLSSDLPPRAGAGAGASPGWPQRWRRRRQRGVERGGAVSGGGGG) are disordered. Residues 10 to 25 (PPRAGAGAGASPGWPQ) show a composition bias toward low complexity. The 314-residue stretch at 88-401 (AACLHTQQGR…DDCAVVCLFL (314 aa)) folds into the PPM-type phosphatase domain. Mn(2+) contacts are provided by Asp-123 and Gly-124. Residues 151–172 (SANEDTSSHQNGSISGSVNSEE) show a composition bias toward polar residues. Residues 151 to 176 (SANEDTSSHQNGSISGSVNSEESPVV) are disordered. Mn(2+) is bound by residues Asp-346 and Asp-392.

The protein belongs to the PP2C family. The cofactor is Mg(2+). Mn(2+) is required as a cofactor.

The enzyme catalyses O-phospho-L-seryl-[protein] + H2O = L-seryl-[protein] + phosphate. It carries out the reaction O-phospho-L-threonyl-[protein] + H2O = L-threonyl-[protein] + phosphate. This is Probable protein phosphatase 2C 66 from Oryza sativa subsp. japonica (Rice).